The primary structure comprises 338 residues: Anthranilate phosphoribosyltransferase (338 aa).

Residues glycine 81, 84 to 85, threonine 89, 91 to 94, 109 to 117, and serine 121 contribute to the 5-phospho-alpha-D-ribose 1-diphosphate site; these read GD, NIST, and KHGNRAVSS. Glycine 81 contacts anthranilate. Serine 93 is a Mg(2+) binding site. Residue asparagine 112 coordinates anthranilate. Arginine 167 is a binding site for anthranilate. 2 residues coordinate Mg(2+): aspartate 226 and glutamate 227.

The protein belongs to the anthranilate phosphoribosyltransferase family. Homodimer. Mg(2+) serves as cofactor.

The catalysed reaction is N-(5-phospho-beta-D-ribosyl)anthranilate + diphosphate = 5-phospho-alpha-D-ribose 1-diphosphate + anthranilate. The protein operates within amino-acid biosynthesis; L-tryptophan biosynthesis; L-tryptophan from chorismate: step 2/5. Catalyzes the transfer of the phosphoribosyl group of 5-phosphorylribose-1-pyrophosphate (PRPP) to anthranilate to yield N-(5'-phosphoribosyl)-anthranilate (PRA). The polypeptide is Anthranilate phosphoribosyltransferase (Myxococcus xanthus (strain DK1622)).